The chain runs to 114 residues: MSEEFQESDIIFSDQSKISTSSRYTKLYNSRNDEKKGTRRHETAEKTSPVRIPTNNFRCLEWDTTEEEDDKTPPHVIIERRMKEQIAFSACTLKGRDLSRHRNSVLRMTGFLEA.

Residues 23–50 (RYTKLYNSRNDEKKGTRRHETAEKTSPV) are disordered. The span at 31–45 (RNDEKKGTRRHETAE) shows a compositional bias: basic and acidic residues.

It belongs to the senescence regulator S40 family.

The protein localises to the cytoplasm. The chain is Protein S40-2 from Arabidopsis thaliana (Mouse-ear cress).